A 468-amino-acid polypeptide reads, in one-letter code: ATP synthase subunit beta (468 aa).

155–162 is an ATP binding site; that stretch reads GGAGVGKT.

This sequence belongs to the ATPase alpha/beta chains family. In terms of assembly, F-type ATPases have 2 components, CF(1) - the catalytic core - and CF(0) - the membrane proton channel. CF(1) has five subunits: alpha(3), beta(3), gamma(1), delta(1), epsilon(1). CF(0) has three main subunits: a(1), b(2) and c(9-12). The alpha and beta chains form an alternating ring which encloses part of the gamma chain. CF(1) is attached to CF(0) by a central stalk formed by the gamma and epsilon chains, while a peripheral stalk is formed by the delta and b chains.

The protein resides in the cell inner membrane. It carries out the reaction ATP + H2O + 4 H(+)(in) = ADP + phosphate + 5 H(+)(out). Produces ATP from ADP in the presence of a proton gradient across the membrane. The catalytic sites are hosted primarily by the beta subunits. In Thermotoga petrophila (strain ATCC BAA-488 / DSM 13995 / JCM 10881 / RKU-1), this protein is ATP synthase subunit beta.